A 337-amino-acid chain; its full sequence is Glycerol-3-phosphate dehydrogenase [NAD(P)+] (337 aa).

Residues S17, Y18, H38, and K112 each contribute to the NADPH site. K112, G141, and T143 together coordinate sn-glycerol 3-phosphate. A145 provides a ligand contact to NADPH. Residues K197, D250, S260, R261, and N262 each contribute to the sn-glycerol 3-phosphate site. The active-site Proton acceptor is K197. Position 261 (R261) interacts with NADPH. The NADPH site is built by V285 and E287.

The protein belongs to the NAD-dependent glycerol-3-phosphate dehydrogenase family.

The protein localises to the cytoplasm. The enzyme catalyses sn-glycerol 3-phosphate + NAD(+) = dihydroxyacetone phosphate + NADH + H(+). It carries out the reaction sn-glycerol 3-phosphate + NADP(+) = dihydroxyacetone phosphate + NADPH + H(+). The protein operates within membrane lipid metabolism; glycerophospholipid metabolism. Its function is as follows. Catalyzes the reduction of the glycolytic intermediate dihydroxyacetone phosphate (DHAP) to sn-glycerol 3-phosphate (G3P), the key precursor for phospholipid synthesis. The protein is Glycerol-3-phosphate dehydrogenase [NAD(P)+] of Pasteurella multocida (strain Pm70).